The sequence spans 105 residues: Phosphoribosyl-ATP pyrophosphatase (105 aa).

Belongs to the PRA-PH family.

It is found in the cytoplasm. The catalysed reaction is 1-(5-phospho-beta-D-ribosyl)-ATP + H2O = 1-(5-phospho-beta-D-ribosyl)-5'-AMP + diphosphate + H(+). It participates in amino-acid biosynthesis; L-histidine biosynthesis; L-histidine from 5-phospho-alpha-D-ribose 1-diphosphate: step 2/9. The polypeptide is Phosphoribosyl-ATP pyrophosphatase (Ruegeria pomeroyi (strain ATCC 700808 / DSM 15171 / DSS-3) (Silicibacter pomeroyi)).